Reading from the N-terminus, the 144-residue chain is Flagellar assembly factor FliW (144 aa).

This sequence belongs to the FliW family. In terms of assembly, monomer. One copy interacts with the each alpha-helical wing of the CsrA homodimer, yielding a FliW-CsrA(2)-FliW complex. Comparison with a CsrA-mRNA structure (2JPP) suggests CsrA cannot bind both mRNA and FliW at the same time. Interacts with flagellin.

Its subcellular location is the cytoplasm. Functionally, acts as an anti-CsrA protein, binds CsrA and prevents it from repressing translation of its target genes, one of which is flagellin. Binds to flagellin and participates in the assembly of the flagellum. Allosterically inhibits CsrA binding to mRNA in a non-competitive fashion by preventing CsrA binding to the 5'-UTR. The chain is Flagellar assembly factor FliW from Geobacillus thermodenitrificans (strain NG80-2).